A 201-amino-acid polypeptide reads, in one-letter code: MNDRMVWIDCEMTGLSLADDALIEVAALVTDSELNVLGEGVDIVIRPPDAALETMPEVVRQMHTASGLLDELAGGTTLADAEEQVLAYVREHVKEPGKAPLCGNSVGTDRGFLARDMRELEGYLHYRIVDVSSVKELARRWYPRAYFNSPAKNGNHRALADIRDSITELRYYREAVFVPQPGPDSERAKEIAARLSAPAAP.

The Exonuclease domain maps to 5-169; that stretch reads MVWIDCEMTG…ADIRDSITEL (165 aa). Y126 is a catalytic residue.

Belongs to the oligoribonuclease family.

The protein localises to the cytoplasm. 3'-to-5' exoribonuclease specific for small oligoribonucleotides. This Streptomyces griseus protein is Oligoribonuclease.